The sequence spans 417 residues: Gamma-glutamyl phosphate reductase (417 aa).

This sequence belongs to the gamma-glutamyl phosphate reductase family.

The protein localises to the cytoplasm. The enzyme catalyses L-glutamate 5-semialdehyde + phosphate + NADP(+) = L-glutamyl 5-phosphate + NADPH + H(+). It functions in the pathway amino-acid biosynthesis; L-proline biosynthesis; L-glutamate 5-semialdehyde from L-glutamate: step 2/2. In terms of biological role, catalyzes the NADPH-dependent reduction of L-glutamate 5-phosphate into L-glutamate 5-semialdehyde and phosphate. The product spontaneously undergoes cyclization to form 1-pyrroline-5-carboxylate. The polypeptide is Gamma-glutamyl phosphate reductase (Haemophilus influenzae (strain PittGG)).